The following is a 358-amino-acid chain: MKFFDREKEIAEILHILNREPDDVYFIYGPINSGKTALINEIINNRLDKDKYVVFYFDLREIFISKYDDFIEVLFEEYEGNKKPVEIIKSLIKDVPSLCGIPAPKNTLEEILKKKTTKNVFRYITKVLMDIKKEGKQPILIIDELQKIGDMKINGFLIYELFNYFVSLTKHKHLCHVFCLSSDSLFIERVYNEAMLDGRAKYLLVDDFDKETALKFMDFLAKENNISLTNEDKELIYNYVGGKPKDIKYVVEESNFKDLKEVLDYLLNDEISKLDMFLEILDYSKPRVEVGNEVIEINKEDIIKALRLFKDKYEIPKKDIPTPVYVYLVKENILFLNPQKRILKPQSYLVWNAIKRLL.

29 to 36 (GPINSGKT) is a binding site for ATP.

Belongs to the archaeal ATPase family.

This is an uncharacterized protein from Methanocaldococcus jannaschii (strain ATCC 43067 / DSM 2661 / JAL-1 / JCM 10045 / NBRC 100440) (Methanococcus jannaschii).